The primary structure comprises 185 residues: Ribonuclease M5 (185 aa).

In terms of domain architecture, Toprim spans 3 to 84 (KEVIVVEGRD…KHARISQSEG (82 aa)). The Mg(2+) site is built by Glu9, Asp55, and Asp57.

Belongs to the ribonuclease M5 family. Mg(2+) serves as cofactor.

The protein localises to the cytoplasm. The enzyme catalyses Endonucleolytic cleavage of RNA, removing 21 and 42 nucleotides, respectively, from the 5'- and 3'-termini of a 5S-rRNA precursor.. Functionally, required for correct processing of both the 5' and 3' ends of 5S rRNA precursor. Cleaves both sides of a double-stranded region yielding mature 5S rRNA in one step. This Clostridium acetobutylicum (strain ATCC 824 / DSM 792 / JCM 1419 / IAM 19013 / LMG 5710 / NBRC 13948 / NRRL B-527 / VKM B-1787 / 2291 / W) protein is Ribonuclease M5.